We begin with the raw amino-acid sequence, 256 residues long: Ribonuclease 3 (256 aa).

An RNase III domain is found at 3–125 (LDALQQRLGY…IVGAVFLDAG (123 aa)). Position 38 (glutamate 38) interacts with Mg(2+). Aspartate 42 is an active-site residue. Mg(2+) is bound by residues aspartate 111 and glutamate 114. Residue glutamate 114 is part of the active site. One can recognise a DRBM domain in the interval 152 to 222 (DAKTLLQEYL…AKLALDEVQK (71 aa)). The segment at 229–256 (KRSRAERTGKTRKQPQPQDPQLSLRLKE) is disordered.

Belongs to the ribonuclease III family. Homodimer. The cofactor is Mg(2+).

It localises to the cytoplasm. The catalysed reaction is Endonucleolytic cleavage to 5'-phosphomonoester.. Digests double-stranded RNA. Involved in the processing of primary rRNA transcript to yield the immediate precursors to the large and small rRNAs (23S and 16S). Processes some mRNAs, and tRNAs when they are encoded in the rRNA operon. Processes pre-crRNA and tracrRNA of type II CRISPR loci if present in the organism. The protein is Ribonuclease 3 of Cupriavidus taiwanensis (strain DSM 17343 / BCRC 17206 / CCUG 44338 / CIP 107171 / LMG 19424 / R1) (Ralstonia taiwanensis (strain LMG 19424)).